Here is a 291-residue protein sequence, read N- to C-terminus: Protease HtpX (291 aa).

2 helical membrane-spanning segments follow: residues isoleucine 4–cysteine 24 and isoleucine 37–isoleucine 57. Histidine 139 contributes to the Zn(2+) binding site. Residue glutamate 140 is part of the active site. Residue histidine 143 coordinates Zn(2+). Transmembrane regions (helical) follow at residues glycine 147–serine 167 and isoleucine 195–phenylalanine 215. A Zn(2+)-binding site is contributed by glutamate 220.

The protein belongs to the peptidase M48B family. The cofactor is Zn(2+).

It localises to the cell membrane. This chain is Protease HtpX, found in Baumannia cicadellinicola subsp. Homalodisca coagulata.